Reading from the N-terminus, the 529-residue chain is Peptide chain release factor 3 (529 aa).

Residues 10 to 278 (ARRRTFAIIS…MFVEFAPGPQ (269 aa)) enclose the tr-type G domain. GTP contacts are provided by residues 19-26 (SHPDAGKT), 87-91 (DTPGH), and 141-144 (NKMD).

It belongs to the TRAFAC class translation factor GTPase superfamily. Classic translation factor GTPase family. PrfC subfamily.

It is found in the cytoplasm. Increases the formation of ribosomal termination complexes and stimulates activities of RF-1 and RF-2. It binds guanine nucleotides and has strong preference for UGA stop codons. It may interact directly with the ribosome. The stimulation of RF-1 and RF-2 is significantly reduced by GTP and GDP, but not by GMP. In Nitratidesulfovibrio vulgaris (strain DSM 19637 / Miyazaki F) (Desulfovibrio vulgaris), this protein is Peptide chain release factor 3.